The following is a 177-amino-acid chain: T-cell receptor beta chain C region (177 aa).

A c region region spans residues Glu-1 to Glu-150. N-linked (GlcNAc...) asparagine glycosylation is found at Asn-5 and Asn-22. Cys-31 and Cys-96 form a disulfide bridge. The helical transmembrane segment at Thr-146–Leu-168 threads the bilayer. Residues Met-169–Ser-177 are Cytoplasmic-facing.

Its subcellular location is the membrane. This is T-cell receptor beta chain C region from Oryctolagus cuniculus (Rabbit).